Consider the following 77-residue polypeptide: Serine protease inhibitor 2 (77 aa).

A signal peptide spans 1-17 (MMFTPLIVLTLLVLATA). 5 cysteine pairs are disulfide-bonded: C21/C53, C30/C48, C33/C44, C37/C74, and C55/C68. Positions 21 to 74 (CGPNEQWSDCPKCELQCGESDKPCATICGEPKCYCSPDKYRRIPDGRCIRKIQC) constitute a TIL domain.

It localises to the secreted. Its function is as follows. Defends the organism against the host's proteinases. This is Serine protease inhibitor 2 from Anisakis simplex (Herring worm).